A 555-amino-acid chain; its full sequence is CTP synthase (555 aa).

The segment at 1–267 is amidoligase domain; it reads MAKFVFVTGG…CKEVLDCLDL (267 aa). Ser13 is a binding site for CTP. Ser13 provides a ligand contact to UTP. Residues 14–19 and Asp71 each bind ATP; that span reads SIGKGI. Mg(2+) contacts are provided by Asp71 and Glu141. CTP contacts are provided by residues 148-150, 188-193, and Lys224; these read DIE and KTKPTQ. Residues 188–193 and Lys224 each bind UTP; that span reads KTKPTQ. The Glutamine amidotransferase type-1 domain occupies 292–534; that stretch reads KVALVGKYVQ…IQAAQIRVPS (243 aa). Gly354 is an L-glutamine binding site. Cys381 (nucleophile; for glutamine hydrolysis) is an active-site residue. Residues 382 to 385, Glu405, and Arg462 contribute to the L-glutamine site; that span reads LGMQ. Active-site residues include His507 and Glu509. The interval 536–555 is disordered; that stretch reads PSEAFNPQSKIIEKKSLEQQ. Basic and acidic residues predominate over residues 546 to 555; the sequence is IIEKKSLEQQ.

The protein belongs to the CTP synthase family. As to quaternary structure, homotetramer.

The catalysed reaction is UTP + L-glutamine + ATP + H2O = CTP + L-glutamate + ADP + phosphate + 2 H(+). It catalyses the reaction L-glutamine + H2O = L-glutamate + NH4(+). It carries out the reaction UTP + NH4(+) + ATP = CTP + ADP + phosphate + 2 H(+). It functions in the pathway pyrimidine metabolism; CTP biosynthesis via de novo pathway; CTP from UDP: step 2/2. With respect to regulation, allosterically activated by GTP, when glutamine is the substrate; GTP has no effect on the reaction when ammonia is the substrate. The allosteric effector GTP functions by stabilizing the protein conformation that binds the tetrahedral intermediate(s) formed during glutamine hydrolysis. Inhibited by the product CTP, via allosteric rather than competitive inhibition. Functionally, catalyzes the ATP-dependent amination of UTP to CTP with either L-glutamine or ammonia as the source of nitrogen. Regulates intracellular CTP levels through interactions with the four ribonucleotide triphosphates. This is CTP synthase from Prochlorococcus marinus (strain NATL1A).